The following is a 124-amino-acid chain: Profilin-2 (124 aa).

Belongs to the profilin family. In terms of assembly, occurs in many kinds of cells as a complex with monomeric actin in a 1:1 ratio. Interacts with forH.

The protein resides in the cytoplasm. It is found in the cytoskeleton. In terms of biological role, binds to actin and affects the structure of the cytoskeleton. At high concentrations, profilin prevents the polymerization of actin, whereas it enhances it at low concentrations. By binding to PIP2, it inhibits the formation of IP3 and DG. The sequence is that of Profilin-2 (proB) from Dictyostelium discoideum (Social amoeba).